The primary structure comprises 227 residues: ATP-dependent Clp protease proteolytic subunit (227 aa).

Ser120 serves as the catalytic Nucleophile. The active site involves His145.

The protein belongs to the peptidase S14 family. Fourteen ClpP subunits assemble into 2 heptameric rings which stack back to back to give a disk-like structure with a central cavity, resembling the structure of eukaryotic proteasomes.

The protein resides in the cytoplasm. The catalysed reaction is Hydrolysis of proteins to small peptides in the presence of ATP and magnesium. alpha-casein is the usual test substrate. In the absence of ATP, only oligopeptides shorter than five residues are hydrolyzed (such as succinyl-Leu-Tyr-|-NHMec, and Leu-Tyr-Leu-|-Tyr-Trp, in which cleavage of the -Tyr-|-Leu- and -Tyr-|-Trp bonds also occurs).. Its function is as follows. Cleaves peptides in various proteins in a process that requires ATP hydrolysis. Has a chymotrypsin-like activity. Plays a major role in the degradation of misfolded proteins. In Rickettsia bellii (strain RML369-C), this protein is ATP-dependent Clp protease proteolytic subunit.